Consider the following 194-residue polypeptide: Probable proteasome subunit beta type-4 (194 aa).

Belongs to the peptidase T1B family. The 26S proteasome consists of a 20S proteasome core and two 19S regulatory subunits. The 20S proteasome core is composed of 28 subunits that are arranged in four stacked rings, resulting in a barrel-shaped structure. The two end rings are each formed by seven alpha subunits, and the two central rings are each formed by seven beta subunits. The catalytic chamber with the active sites is on the inside of the barrel.

The protein resides in the cytoplasm. It localises to the nucleus. In terms of biological role, non-catalytic component of the proteasome, a multicatalytic proteinase complex which is characterized by its ability to cleave peptides with Arg, Phe, Tyr, Leu, and Glu adjacent to the leaving group at neutral or slightly basic pH. The proteasome has an ATP-dependent proteolytic activity. The chain is Probable proteasome subunit beta type-4 (PRO2) from Meyerozyma guilliermondii (strain ATCC 6260 / CBS 566 / DSM 6381 / JCM 1539 / NBRC 10279 / NRRL Y-324) (Yeast).